Reading from the N-terminus, the 578-residue chain is A-type ATP synthase subunit A (578 aa).

Position 228-235 (228-235 (GPFGSGKT)) interacts with ATP.

This sequence belongs to the ATPase alpha/beta chains family. As to quaternary structure, has multiple subunits with at least A(3), B(3), C, D, E, F, G, I and proteolipid K(x).

The protein resides in the cell membrane. It carries out the reaction ATP + H2O + 4 H(+)(in) = ADP + phosphate + 5 H(+)(out). ATP hydrolysis stimulated by sulfite, ethanol, glycerol, magnesium and zinc ions, inhibited by diethylstilbestrol (DES) and less well by N,N-dicyclohexylcarbodiimide (DCCD). In terms of biological role, component of the A-type ATP synthase that produces ATP from ADP in the presence of a proton gradient across the membrane. The A chain is the catalytic subunit. In Methanosarcina mazei (strain ATCC BAA-159 / DSM 3647 / Goe1 / Go1 / JCM 11833 / OCM 88) (Methanosarcina frisia), this protein is A-type ATP synthase subunit A.